A 299-amino-acid chain; its full sequence is Deoxyhypusine hydroxylase (299 aa).

HEAT-like PBS-type repeat units lie at residues 54–80 (LKHELAFCLGQMRDRAAIPALLGVLQD), 87–113 (VRHEAGEALGAIGDPEVLDVLRRYSED), 174–200 (DRYRAMFALRNLGGRDAVLALADGLRA), 205–231 (FRHEIGYVLGQMQDEACVPQLTAALRS), and 238–264 (VRHECAEALGSIARPSCLETLRAFAQD). The Fe cation site is built by histidine 56, histidine 89, and glutamate 90. Fe cation contacts are provided by histidine 207, histidine 240, and glutamate 241.

The protein belongs to the deoxyhypusine hydroxylase family. Requires Fe(2+) as cofactor.

It carries out the reaction [eIF5A protein]-deoxyhypusine + AH2 + O2 = [eIF5A protein]-hypusine + A + H2O. Its pathway is protein modification; eIF5A hypusination. In terms of biological role, catalyzes the hydroxylation of the N(6)-(4-aminobutyl)-L-lysine intermediate produced by deoxyhypusine synthase/DHPS on a critical lysine of the eukaryotic translation initiation factor 5A/eIF-5A. This is the second step of the post-translational modification of that lysine into an unusual amino acid residue named hypusine. Hypusination is unique to mature eIF-5A factor and is essential for its function. The sequence is that of Deoxyhypusine hydroxylase from Gallus gallus (Chicken).